We begin with the raw amino-acid sequence, 177 residues long: Large ribosomal subunit protein uL6 (177 aa).

The protein belongs to the universal ribosomal protein uL6 family. As to quaternary structure, part of the 50S ribosomal subunit.

Functionally, this protein binds to the 23S rRNA, and is important in its secondary structure. It is located near the subunit interface in the base of the L7/L12 stalk, and near the tRNA binding site of the peptidyltransferase center. This Rickettsia rickettsii (strain Iowa) protein is Large ribosomal subunit protein uL6.